We begin with the raw amino-acid sequence, 629 residues long: Dehydrogenase pyvF (629 aa).

The N-terminal stretch at 1–22 is a signal peptide; it reads MAGSPFTTALLSAWTLSTVAVG. FAD is bound by residues 61 to 62 and 82 to 83; these read AS and EA. Residue asparagine 92 is glycosylated (N-linked (GlcNAc...) asparagine). 144 to 147 lines the FAD pocket; the sequence is NLMA. Asparagine 172, asparagine 182, asparagine 256, asparagine 284, asparagine 312, and asparagine 421 each carry an N-linked (GlcNAc...) asparagine glycan. Catalysis depends on histidine 552, which acts as the Proton acceptor. FAD contacts are provided by residues alanine 586 and 597 to 598; that span reads PL.

The protein belongs to the GMC oxidoreductase family. In terms of assembly, homodimer. It depends on FAD as a cofactor.

Its pathway is secondary metabolite biosynthesis. Dehydrogenase; part of the gene cluster that mediates the biosynthesis of pyranoviolin A, a pyranonigrin analog with a C-3 methoxy group. Initially, the PKS portion of pyvA synthesizes C-10 carbon chain from 5 molecules of malonyl-CoA, which is then condensed with the thiolation (T) domain-bound glycine activated by the adenylation (A) domain. The subsequent chain release by Dieckmann condensation (DKC) could be catalyzed by the TE domain present at the C-terminus of pyvA and/or the alpha/beta hydrolase pyvD, installing the tetramic acid moiety. The FAD-dependent monooxygenase pyvC next epoxidizes one of the olefins of the polyketide part, and the epoxide ring-opening induces the dihydro-gamma-pyrone ring formation. The cytochrome P450 monooxygeanse pyvB would be responsible for the 2 consecutive reactions, in which the dihydro-gamma-pyrone is oxidized to gamma-pyrone and C-7 is hydroxylated to yield pyranonigrin F. Finally, the O-methyltransferase pyvH methylates the C-3 hydroxy group to complete the biosynthesis. The polypeptide is Dehydrogenase pyvF (Aspergillus violaceofuscus (strain CBS 115571)).